A 629-amino-acid chain; its full sequence is Phosphomethylpyrimidine synthase (629 aa).

Residues 1–24 are disordered; that stretch reads MSTKPKNAAHLSESAQVDSGSVQP. Over residues 13–24 the composition is skewed to polar residues; it reads ESAQVDSGSVQP. Substrate is bound by residues asparagine 233, methionine 262, tyrosine 291, histidine 327, 347–349, 388–391, and glutamate 427; these read SRG and DGLR. Residue histidine 431 coordinates Zn(2+). Residue tyrosine 454 participates in substrate binding. Histidine 495 is a Zn(2+) binding site. [4Fe-4S] cluster-binding residues include cysteine 575, cysteine 578, and cysteine 583.

Belongs to the ThiC family. Homodimer. It depends on [4Fe-4S] cluster as a cofactor.

It catalyses the reaction 5-amino-1-(5-phospho-beta-D-ribosyl)imidazole + S-adenosyl-L-methionine = 4-amino-2-methyl-5-(phosphooxymethyl)pyrimidine + CO + 5'-deoxyadenosine + formate + L-methionine + 3 H(+). It functions in the pathway cofactor biosynthesis; thiamine diphosphate biosynthesis. In terms of biological role, catalyzes the synthesis of the hydroxymethylpyrimidine phosphate (HMP-P) moiety of thiamine from aminoimidazole ribotide (AIR) in a radical S-adenosyl-L-methionine (SAM)-dependent reaction. The sequence is that of Phosphomethylpyrimidine synthase from Pseudomonas syringae pv. tomato (strain ATCC BAA-871 / DC3000).